Here is a 314-residue protein sequence, read N- to C-terminus: Methionyl-tRNA formyltransferase (314 aa).

Residue 112-115 (SLLP) coordinates (6S)-5,6,7,8-tetrahydrofolate.

The protein belongs to the Fmt family.

The catalysed reaction is L-methionyl-tRNA(fMet) + (6R)-10-formyltetrahydrofolate = N-formyl-L-methionyl-tRNA(fMet) + (6S)-5,6,7,8-tetrahydrofolate + H(+). Attaches a formyl group to the free amino group of methionyl-tRNA(fMet). The formyl group appears to play a dual role in the initiator identity of N-formylmethionyl-tRNA by promoting its recognition by IF2 and preventing the misappropriation of this tRNA by the elongation apparatus. The protein is Methionyl-tRNA formyltransferase of Buchnera aphidicola subsp. Acyrthosiphon pisum (strain 5A).